We begin with the raw amino-acid sequence, 105 residues long: Thioredoxin (105 aa).

The Thioredoxin domain occupies 2–103 (VKQIESKSAF…KEKLEATIKG (102 aa)). Lysine 3 bears the N6-acetyllysine mark. N6-succinyllysine is present on lysine 8. Active-site nucleophile residues include cysteine 32 and cysteine 35. Cysteine 32 and cysteine 35 are joined by a disulfide. Lysine 39 bears the N6-acetyllysine mark. S-nitrosocysteine occurs at positions 62 and 69. Cysteine 73 bears the S-nitrosocysteine; alternate mark. Lysine 94 bears the N6-acetyllysine; alternate mark. At lysine 94 the chain carries N6-succinyllysine; alternate.

This sequence belongs to the thioredoxin family. Homodimer; disulfide-linked. Interacts with TXNIP through the redox-active site. Interacts with MAP3K5 and CASP3. Interacts with APEX1; the interaction stimulates the FOS/JUN AP-1 DNA-binding activity in a redox-dependent manner. Post-translationally, in the fully reduced protein, both Cys-69 and Cys-73 are nitrosylated in response to nitric oxide (NO). When two disulfide bonds are present in the protein, only Cys-73 is nitrosylated. Cys-73 can serve as donor for nitrosylation of target proteins.

The protein localises to the nucleus. It is found in the cytoplasm. Its subcellular location is the secreted. Participates in various redox reactions through the reversible oxidation of its active center dithiol to a disulfide and catalyzes dithiol-disulfide exchange reactions. Plays a role in the reversible S-nitrosylation of cysteine residues in target proteins, and thereby contributes to the response to intracellular nitric oxide. Nitrosylates the active site Cys of CASP3 in response to nitric oxide (NO), and thereby inhibits caspase-3 activity. Induces the FOS/JUN AP-1 DNA binding activity in ionizing radiation (IR) cells through its oxidation/reduction status and stimulates AP-1 transcriptional activity. The protein is Thioredoxin (TXN) of Equus caballus (Horse).